The sequence spans 322 residues: tRNA U34 carboxymethyltransferase (322 aa).

Carboxy-S-adenosyl-L-methionine is bound by residues K90, W104, K109, G129, 151–153, 179–180, M195, Y199, and R314; these read DPT and ME.

This sequence belongs to the class I-like SAM-binding methyltransferase superfamily. CmoB family. As to quaternary structure, homotetramer.

The enzyme catalyses carboxy-S-adenosyl-L-methionine + 5-hydroxyuridine(34) in tRNA = 5-carboxymethoxyuridine(34) in tRNA + S-adenosyl-L-homocysteine + H(+). Its function is as follows. Catalyzes carboxymethyl transfer from carboxy-S-adenosyl-L-methionine (Cx-SAM) to 5-hydroxyuridine (ho5U) to form 5-carboxymethoxyuridine (cmo5U) at position 34 in tRNAs. This is tRNA U34 carboxymethyltransferase from Alcanivorax borkumensis (strain ATCC 700651 / DSM 11573 / NCIMB 13689 / SK2).